We begin with the raw amino-acid sequence, 511 residues long: Alpha-amylase 2B (511 aa).

A signal peptide spans 1-15; it reads MKFFLLLFTIGFCWA. Residue Gln-16 is modified to Pyrrolidone carboxylic acid. Cystine bridges form between Cys-43-Cys-101, Cys-85-Cys-130, and Cys-156-Cys-175. Residues Asn-115, Arg-173, and Asp-182 each contribute to the Ca(2+) site. Arg-210 is a chloride binding site. The active-site Nucleophile is the Asp-212. Ca(2+) is bound at residue His-216. Glu-248 functions as the Proton donor in the catalytic mechanism. Residues Asn-313 and Arg-352 each contribute to the chloride site. Disulfide bonds link Cys-393-Cys-399 and Cys-465-Cys-477.

It belongs to the glycosyl hydrolase 13 family. Monomer. Ca(2+) serves as cofactor. The cofactor is chloride.

Its subcellular location is the secreted. The enzyme catalyses Endohydrolysis of (1-&gt;4)-alpha-D-glucosidic linkages in polysaccharides containing three or more (1-&gt;4)-alpha-linked D-glucose units.. This Homo sapiens (Human) protein is Alpha-amylase 2B (AMY2B).